Here is a 486-residue protein sequence, read N- to C-terminus: NADH-quinone oxidoreductase subunit N 1 (486 aa).

Helical transmembrane passes span 15–35 (FLPEIILTVMGTLLMVLDPVI), 46–66 (ISLIALVMALGASIYAYGIAG), 72–92 (MLMVDGFATFFRVVVITVGIL), 111–128 (YHALLLFSIAGQCLMAAS), 131–151 (LIMVFIGLEISSIASYVLAGY), 166–186 (FLLGSFATGFFLYGVAWIYGL), 208–228 (FVGIAAALMFVGLAFKVSAAP), 241–261 (PTPVSAFLSAGPKAAAFAIFL), 276–296 (QPLVWTAALASMCIGNFAAIL), 303–323 (MLAYSSIAHAGYVLVALTAHS), 331–351 (MFYLAGYAFMNVGAFAAVSVL), 375–395 (AAMFTIFLLSLLGVPLTGGFF), 410–432 (IWLTVLGLLNSAVGAYYYLRILV), and 455–475 (FALILPALGTLALGIFPGWVL).

This sequence belongs to the complex I subunit 2 family. As to quaternary structure, NDH-1 is composed of 14 different subunits. Subunits NuoA, H, J, K, L, M, N constitute the membrane sector of the complex.

It is found in the cell inner membrane. It carries out the reaction a quinone + NADH + 5 H(+)(in) = a quinol + NAD(+) + 4 H(+)(out). Its function is as follows. NDH-1 shuttles electrons from NADH, via FMN and iron-sulfur (Fe-S) centers, to quinones in the respiratory chain. The immediate electron acceptor for the enzyme in this species is believed to be ubiquinone. Couples the redox reaction to proton translocation (for every two electrons transferred, four hydrogen ions are translocated across the cytoplasmic membrane), and thus conserves the redox energy in a proton gradient. This Solibacter usitatus (strain Ellin6076) protein is NADH-quinone oxidoreductase subunit N 1.